A 159-amino-acid polypeptide reads, in one-letter code: Protein RseC (159 aa).

Topologically, residues 1–72 are cytoplasmic; it reads MIKEWATVVS…QKVELGIAEG (72 aa). The helical transmembrane segment at 73–95 threads the bilayer; the sequence is SLLSSALLVYMSPLVGLFLIASL. Residues 96–98 lie on the Periplasmic side of the membrane; sequence FQL. Residues 99–121 form a helical membrane-spanning segment; sequence LFASDVAALCGAILGGIGGFLIA. The Cytoplasmic portion of the chain corresponds to 122–159; sequence RGYSRKFAARAEWQPIILSVALPPGLVRFETSSEDASQ.

It belongs to the RseC family.

Its subcellular location is the cell inner membrane. In terms of biological role, may play a role in reduction of the SoxR iron-sulfur cluster. May work together with the RsxABCDGE complex. This Escherichia coli (strain K12) protein is Protein RseC.